A 556-amino-acid polypeptide reads, in one-letter code: Arginine--tRNA ligase (556 aa).

The 'HIGH' region signature appears at 130-140 (ANPTGPIHLGG).

Belongs to the class-I aminoacyl-tRNA synthetase family. In terms of assembly, monomer.

The protein localises to the cytoplasm. It catalyses the reaction tRNA(Arg) + L-arginine + ATP = L-arginyl-tRNA(Arg) + AMP + diphosphate. The protein is Arginine--tRNA ligase of Corynebacterium jeikeium (strain K411).